The chain runs to 209 residues: Guanylate kinase (209 aa).

Residues 5-184 (GLLIVFSGPS…AAERVKRVIE (180 aa)) enclose the Guanylate kinase-like domain. 12–19 (GPSGVGKG) contributes to the ATP binding site.

Belongs to the guanylate kinase family.

The protein resides in the cytoplasm. The enzyme catalyses GMP + ATP = GDP + ADP. Essential for recycling GMP and indirectly, cGMP. The chain is Guanylate kinase from Streptococcus agalactiae serotype Ia (strain ATCC 27591 / A909 / CDC SS700).